Consider the following 39-residue polypeptide: SPbeta prophage-derived membrane protein YosA (39 aa).

A helical transmembrane segment spans residues 19-39 (SFVLIVVLFILLIIVGATFLY).

The protein belongs to the SscA family.

The protein localises to the membrane. The sequence is that of SPbeta prophage-derived membrane protein YosA (yosA) from Bacillus subtilis (strain 168).